The following is a 238-amino-acid chain: Mitochondrial inner membrane protease atp23 (238 aa).

H137 contacts a divalent metal cation. E138 is an active-site residue. H141 contacts a divalent metal cation.

Belongs to the peptidase M76 family.

Its subcellular location is the mitochondrion inner membrane. Has a dual role in the assembly of mitochondrial ATPase. Acts as a protease that removes N-terminal residues of mitochondrial ATPase CF(0) subunit 6 at the intermembrane space side. Also involved in the correct assembly of the membrane-embedded ATPase CF(0) particle, probably mediating association of subunit 6 with the subunit 9 ring. The chain is Mitochondrial inner membrane protease atp23 (atp23) from Aspergillus oryzae (strain ATCC 42149 / RIB 40) (Yellow koji mold).